The chain runs to 361 residues: Phosphoserine aminotransferase (361 aa).

R42 is an L-glutamate binding site. Pyridoxal 5'-phosphate contacts are provided by residues 76–77, W102, T153, D173, and Q196; that span reads AR. N6-(pyridoxal phosphate)lysine is present on K197. 238–239 is a pyridoxal 5'-phosphate binding site; sequence NT.

This sequence belongs to the class-V pyridoxal-phosphate-dependent aminotransferase family. SerC subfamily. Homodimer. The cofactor is pyridoxal 5'-phosphate.

It localises to the cytoplasm. It catalyses the reaction O-phospho-L-serine + 2-oxoglutarate = 3-phosphooxypyruvate + L-glutamate. It carries out the reaction 4-(phosphooxy)-L-threonine + 2-oxoglutarate = (R)-3-hydroxy-2-oxo-4-phosphooxybutanoate + L-glutamate. Its pathway is amino-acid biosynthesis; L-serine biosynthesis; L-serine from 3-phospho-D-glycerate: step 2/3. It functions in the pathway cofactor biosynthesis; pyridoxine 5'-phosphate biosynthesis; pyridoxine 5'-phosphate from D-erythrose 4-phosphate: step 3/5. Its function is as follows. Catalyzes the reversible conversion of 3-phosphohydroxypyruvate to phosphoserine and of 3-hydroxy-2-oxo-4-phosphonooxybutanoate to phosphohydroxythreonine. In Buchnera aphidicola subsp. Acyrthosiphon pisum (strain 5A), this protein is Phosphoserine aminotransferase.